A 367-amino-acid polypeptide reads, in one-letter code: GTP cyclohydrolase FolE2 (367 aa).

The protein belongs to the GTP cyclohydrolase IV family.

The enzyme catalyses GTP + H2O = 7,8-dihydroneopterin 3'-triphosphate + formate + H(+). It functions in the pathway cofactor biosynthesis; 7,8-dihydroneopterin triphosphate biosynthesis; 7,8-dihydroneopterin triphosphate from GTP: step 1/1. Functionally, converts GTP to 7,8-dihydroneopterin triphosphate. This is GTP cyclohydrolase FolE2 from Roseobacter denitrificans (strain ATCC 33942 / OCh 114) (Erythrobacter sp. (strain OCh 114)).